A 475-amino-acid polypeptide reads, in one-letter code: Ribulose bisphosphate carboxylase large chain (475 aa).

Positions 1–2 (MA) are excised as a propeptide. Pro-3 bears the N-acetylproline mark. Lys-14 is subject to N6,N6,N6-trimethyllysine. Asn-123 and Thr-173 together coordinate substrate. Lys-175 acts as the Proton acceptor in catalysis. Residue Lys-177 participates in substrate binding. Residues Lys-201, Asp-203, and Glu-204 each contribute to the Mg(2+) site. N6-carboxylysine is present on Lys-201. The active-site Proton acceptor is His-294. The substrate site is built by Arg-295, His-327, and Ser-379.

Belongs to the RuBisCO large chain family. Type I subfamily. Heterohexadecamer of 8 large chains and 8 small chains; disulfide-linked. The disulfide link is formed within the large subunit homodimers. Mg(2+) serves as cofactor. The disulfide bond which can form in the large chain dimeric partners within the hexadecamer appears to be associated with oxidative stress and protein turnover.

The protein localises to the plastid. The protein resides in the chloroplast. The catalysed reaction is 2 (2R)-3-phosphoglycerate + 2 H(+) = D-ribulose 1,5-bisphosphate + CO2 + H2O. It carries out the reaction D-ribulose 1,5-bisphosphate + O2 = 2-phosphoglycolate + (2R)-3-phosphoglycerate + 2 H(+). In terms of biological role, ruBisCO catalyzes two reactions: the carboxylation of D-ribulose 1,5-bisphosphate, the primary event in carbon dioxide fixation, as well as the oxidative fragmentation of the pentose substrate in the photorespiration process. Both reactions occur simultaneously and in competition at the same active site. The protein is Ribulose bisphosphate carboxylase large chain of Oedogonium cardiacum (Filamentous green alga).